The chain runs to 256 residues: Imidazole glycerol phosphate synthase subunit hisF1 (256 aa).

Active-site residues include Asp-12 and Asp-131.

It belongs to the HisA/HisF family. As to quaternary structure, heterodimer of HisH and HisF.

The protein localises to the cytoplasm. The catalysed reaction is 5-[(5-phospho-1-deoxy-D-ribulos-1-ylimino)methylamino]-1-(5-phospho-beta-D-ribosyl)imidazole-4-carboxamide + L-glutamine = D-erythro-1-(imidazol-4-yl)glycerol 3-phosphate + 5-amino-1-(5-phospho-beta-D-ribosyl)imidazole-4-carboxamide + L-glutamate + H(+). It functions in the pathway amino-acid biosynthesis; L-histidine biosynthesis; L-histidine from 5-phospho-alpha-D-ribose 1-diphosphate: step 5/9. Functionally, IGPS catalyzes the conversion of PRFAR and glutamine to IGP, AICAR and glutamate. The HisF subunit catalyzes the cyclization activity that produces IGP and AICAR from PRFAR using the ammonia provided by the HisH subunit. The chain is Imidazole glycerol phosphate synthase subunit hisF1 (hisF1) from Pseudomonas aeruginosa (strain ATCC 15692 / DSM 22644 / CIP 104116 / JCM 14847 / LMG 12228 / 1C / PRS 101 / PAO1).